Here is a 412-residue protein sequence, read N- to C-terminus: MSPKKDAVSKPTPISVPVSRRSDIPGSLYVDTDMGFSGSPLPMPLDILQGNPIPPFLSKTFDLVDDPTLDPVISWGLTGASFVVWDPLEFARIILPRNFKHNNFSSFVRQLNTYGFRKIDTDKWEFANEAFLRGKKHLLKNIHRRRSPQSNQTCCSSTSQSQGSPTEVGGEIEKLRKERRALMEEMVELQQQSRGTARHVDTVNQRLKAAEQRQKQLLSFLAKLFQNRGFLERLKNFKGKEKGGALGLEKARKKFIKHHQQPQDSPTGGEVVKYEADDWERLLMYDEETENTKGLGGMTSSDPKGKNLMYPSEEEMSKPDYLMSFPSPEGLIKQEETTWSMGFDTTIPSFSNTDAWGNTMDYNDVSEFGFAAETTSDGLPDVCWEQFAAGITETGFNWPTGDDDDNTPMNDP.

Residues 53-147 (IPPFLSKTFD…LLKNIHRRRS (95 aa)) mediate DNA binding. The segment at 144–170 (RRRSPQSNQTCCSSTSQSQGSPTEVGG) is disordered. The segment covering 148-166 (PQSNQTCCSSTSQSQGSPT) has biased composition (low complexity). The segment at 159–225 (SQSQGSPTEV…QLLSFLAKLF (67 aa)) is hydrophobic repeat HR-A/B. A coiled-coil region spans residues 166–224 (TEVGGEIEKLRKERRALMEEMVELQQQSRGTARHVDTVNQRLKAAEQRQKQLLSFLAKL). The short motif at 238–254 (KGKEKGGALGLEKARKK) is the Bipartite nuclear localization signal element. Residues 277-286 (DDWERLLMYD) carry the AHA1 motif. Positions 381 to 390 (DVCWEQFAAG) match the AHA2 motif.

This sequence belongs to the HSF family. Class A subfamily. As to quaternary structure, homotrimer. In terms of processing, exhibits temperature-dependent phosphorylation.

Its subcellular location is the nucleus. Transcriptional activator that specifically binds DNA sequence 5'-AGAAnnTTCT-3' known as heat shock promoter elements (HSE). Involved in heat stress response. Activated by DREB2A under heat stress. This is Heat stress transcription factor A-3 (HSFA3) from Arabidopsis thaliana (Mouse-ear cress).